A 121-amino-acid chain; its full sequence is Large ribosomal subunit protein uL18 (121 aa).

This sequence belongs to the universal ribosomal protein uL18 family. Part of the 50S ribosomal subunit; part of the 5S rRNA/L5/L18/L25 subcomplex. Contacts the 5S and 23S rRNAs.

In terms of biological role, this is one of the proteins that bind and probably mediate the attachment of the 5S RNA into the large ribosomal subunit, where it forms part of the central protuberance. In Albidiferax ferrireducens (strain ATCC BAA-621 / DSM 15236 / T118) (Rhodoferax ferrireducens), this protein is Large ribosomal subunit protein uL18.